A 98-amino-acid chain; its full sequence is Large ribosomal subunit protein uL23 (98 aa).

It belongs to the universal ribosomal protein uL23 family. As to quaternary structure, part of the 50S ribosomal subunit. Contacts protein L29, and trigger factor when it is bound to the ribosome.

Functionally, one of the early assembly proteins it binds 23S rRNA. One of the proteins that surrounds the polypeptide exit tunnel on the outside of the ribosome. Forms the main docking site for trigger factor binding to the ribosome. In Saccharophagus degradans (strain 2-40 / ATCC 43961 / DSM 17024), this protein is Large ribosomal subunit protein uL23.